The primary structure comprises 329 residues: Fructose-1,6-bisphosphatase class 1 2 (329 aa).

Positions 92, 111, 113, and 114 each coordinate Mg(2+). Residues 114 to 117 (DGSS) and N206 each bind substrate. Position 278 (E278) interacts with Mg(2+).

This sequence belongs to the FBPase class 1 family. As to quaternary structure, homotetramer. Mg(2+) is required as a cofactor.

It is found in the cytoplasm. It carries out the reaction beta-D-fructose 1,6-bisphosphate + H2O = beta-D-fructose 6-phosphate + phosphate. It functions in the pathway carbohydrate biosynthesis; gluconeogenesis. The polypeptide is Fructose-1,6-bisphosphatase class 1 2 (Xanthobacter autotrophicus (strain ATCC BAA-1158 / Py2)).